A 107-amino-acid polypeptide reads, in one-letter code: Small ribosomal subunit protein bS18c (107 aa).

Basic residues predominate over residues 85–95 (KKAQRFKRRQS). Positions 85–107 (KKAQRFKRRQSTARTVGLRTRNK) are disordered.

It belongs to the bacterial ribosomal protein bS18 family. Part of the 30S ribosomal subunit.

Its subcellular location is the plastid. It localises to the chloroplast. This is Small ribosomal subunit protein bS18c from Oenothera argillicola (Appalachian evening primrose).